The primary structure comprises 455 residues: Putative O-acetyltransferase SAT14 (455 aa).

The protein belongs to the lysine N-acyltransferase MbtK family.

The protein operates within mycotoxin biosynthesis. Functionally, putative O-acetyltransferase; part of the satratoxin SC2 cluster involved in the biosynthesis of satratoxins, trichothecene mycotoxins that are associated with human food poisonings. Satratoxins are suggested to be made by products of multiple gene clusters (SC1, SC2 and SC3) that encode 21 proteins in all, including polyketide synthases, acetyltransferases, and other enzymes expected to modify the trichothecene skeleton. SC1 encodes 10 proteins, SAT1 to SAT10. The largest are SAT8, which encodes a putative polyketide synthase (PKS) with a conventional non-reducing architecture, and SAT10, a putative protein containing four ankyrin repeats and thus may be involved in protein scaffolding. The putative short-chain reductase SAT3 may assist the PKS in some capacity. SAT6 contains a secretory lipase domain and acts probably as a trichothecene esterase. SAT5 encodes a putative acetyltransferase, and so, with SAT6, may affect endogenous protection from toxicity. The probable transcription factor SAT9 may regulate the expression of the SC1 cluster. SC2 encodes proteins SAT11 to SAT16, the largest of which encodes the putative reducing PKS SAT13. SAT11 is a cytochrome P450 monooxygenase, while SAT14 and SAT16 are probable acetyltransferases. The SC2 cluster may be regulated by the transcription factor SAT15. SC3 is a small cluster that encodes 5 proteins, SAT17 to SAT21. SAT21 is a putative MFS-type transporter which may have a role in exporting secondary metabolites. The four other proteins putatively encoded in SC3 include the taurine hydroxylase-like protein SAT17, the O-methyltransferase SAT18, the acetyltransferase SAT19, and the Cys6-type zinc finger SAT20, the latter being probably involved in regulation of SC3 expression. The protein is Putative O-acetyltransferase SAT14 of Stachybotrys chartarum (strain CBS 109288 / IBT 7711) (Toxic black mold).